Consider the following 273-residue polypeptide: MSTPGTLHIVATPIGNLGDLSPRAQHILRTVTMICAEDTRHTRQLLAHFGIERPLLALHAHNEDTLAERIITRLISGESLALVSDAGTPLISDPGFLLVRAARAAGIRVTPVPGPSALIAALSVSGLPSNRFTFEGFLPAKPTARRDRLTHLAHEPRTLIFYEASHRIAECLTDLATIFGSMRIAVVARELTKIFETVLDGTLATLQTQVANDENQRKGEFVIIVQGAADQDAAKITEGRRIYALLKEHLPPSSAAKLAAEITGAPRKALYGG.

It belongs to the methyltransferase superfamily. RsmI family.

The protein resides in the cytoplasm. The enzyme catalyses cytidine(1402) in 16S rRNA + S-adenosyl-L-methionine = 2'-O-methylcytidine(1402) in 16S rRNA + S-adenosyl-L-homocysteine + H(+). Its function is as follows. Catalyzes the 2'-O-methylation of the ribose of cytidine 1402 (C1402) in 16S rRNA. The polypeptide is Ribosomal RNA small subunit methyltransferase I (Xylella fastidiosa (strain Temecula1 / ATCC 700964)).